A 1107-amino-acid polypeptide reads, in one-letter code: Integrator complex subunit 6 homolog (1107 aa).

Positions Leu-2–Met-195 constitute a VWFA domain. Disordered stretches follow at residues Arg-454–Leu-515, Asp-542–Ile-572, Thr-629–Pro-801, Gln-818–Asn-861, and Val-946–Asn-1034. Low complexity-rich tracts occupy residues Gln-460 to Gly-513 and Ser-546 to Gly-562. Residues Thr-629 to Pro-639 are compositionally biased toward basic and acidic residues. Residues Pro-693 to Pro-801 show a composition bias toward low complexity. Residues Ser-846 to Pro-857 are compositionally biased toward pro residues. Low complexity predominate over residues Pro-956 to Thr-975. The span at Asn-976–Tyr-996 shows a compositional bias: polar residues. Positions Asn-997–Asn-1034 are enriched in low complexity. Residues Ile-1041–Ile-1103 form the MIF4G domain.

Belongs to the Integrator subunit 6 family. Component of the Integrator complex. The core complex associates with protein phosphatase 2A subunits, to form the Integrator-PP2A (INTAC) complex.

Its subcellular location is the nucleus. It is found in the chromosome. In terms of biological role, component of the integrator complex, a multiprotein complex that terminates RNA polymerase II (Pol II) transcription in the promoter-proximal region of genes. The integrator complex provides a quality checkpoint during transcription elongation by driving premature transcription termination of transcripts that are unfavorably configured for transcriptional elongation: the complex terminates transcription by (1) catalyzing dephosphorylation of the C-terminal domain (CTD) of Pol II subunit polr2a, (2) degrading the exiting nascent RNA transcript via endonuclease activity and (3) promoting the release of Pol II from bound DNA. The integrator complex is also involved in terminating the synthesis of non-coding Pol II transcripts, such as enhancer RNAs (eRNAs), small nuclear RNAs (snRNAs), telomerase RNAs and long non-coding RNAs (lncRNAs). Within the integrator complex, INTS6 acts as a molecular adapter that promotes assembly of protein phosphatase 2A (PP2A) subunits to the integrator core complex, promoting recruitment of PP2A to transcription pause-release checkpoint. In Dictyostelium discoideum (Social amoeba), this protein is Integrator complex subunit 6 homolog (ints6).